The chain runs to 261 residues: 3-deoxy-manno-octulosonate cytidylyltransferase 1 (261 aa).

This sequence belongs to the KdsB family.

Its subcellular location is the cytoplasm. The enzyme catalyses 3-deoxy-alpha-D-manno-oct-2-ulosonate + CTP = CMP-3-deoxy-beta-D-manno-octulosonate + diphosphate. The protein operates within nucleotide-sugar biosynthesis; CMP-3-deoxy-D-manno-octulosonate biosynthesis; CMP-3-deoxy-D-manno-octulosonate from 3-deoxy-D-manno-octulosonate and CTP: step 1/1. It functions in the pathway bacterial outer membrane biogenesis; lipopolysaccharide biosynthesis. Its function is as follows. Activates KDO (a required 8-carbon sugar) for incorporation into bacterial lipopolysaccharide in Gram-negative bacteria. The protein is 3-deoxy-manno-octulosonate cytidylyltransferase 1 of Burkholderia lata (strain ATCC 17760 / DSM 23089 / LMG 22485 / NCIMB 9086 / R18194 / 383).